The chain runs to 162 residues: Phospholipase A2 (162 aa).

An N-terminal signal peptide occupies residues 1 to 22 (MKVLQMFFCVILLCVTSVLVEA). The propeptide occupies 23–35 (KSTTKGDETASKR). 6 cysteine pairs are disulfide-bonded: Cys60-Cys155, Cys62-Cys78, Cys77-Cys134, Cys84-Cys127, Cys94-Cys120, and Cys113-Cys125. Ca(2+) is bound by residues Tyr61, Gly63, and Gly65. Residue His81 is part of the active site. Asp82 is a binding site for Ca(2+). Asp128 is an active-site residue.

It belongs to the phospholipase A2 family. Group I subfamily. D49 sub-subfamily. The cofactor is Ca(2+). Expressed both outside and in acontia, a specialised envenomation structure laden with batteries of venom-containing nematocysts found only in the superfamily Metridioidea.

It is found in the secreted. It localises to the nematocyst. It catalyses the reaction a 1,2-diacyl-sn-glycero-3-phosphocholine + H2O = a 1-acyl-sn-glycero-3-phosphocholine + a fatty acid + H(+). PLA2 catalyzes the calcium-dependent hydrolysis of the 2-acyl groups in 3-sn-phosphoglycerides. The sequence is that of Phospholipase A2 from Calliactis polypus (Hermit crab anemone).